Reading from the N-terminus, the 297-residue chain is Probable endonuclease 4 (297 aa).

Zn(2+)-binding residues include H68, H109, E144, D178, H181, H213, D226, H228, and E258.

This sequence belongs to the AP endonuclease 2 family. Requires Zn(2+) as cofactor.

The catalysed reaction is Endonucleolytic cleavage to 5'-phosphooligonucleotide end-products.. Its function is as follows. Endonuclease IV plays a role in DNA repair. It cleaves phosphodiester bonds at apurinic or apyrimidinic (AP) sites, generating a 3'-hydroxyl group and a 5'-terminal sugar phosphate. This Lysinibacillus sphaericus (strain C3-41) protein is Probable endonuclease 4.